We begin with the raw amino-acid sequence, 265 residues long: Bidirectional sugar transporter SWEET7b (265 aa).

The Extracellular segment spans residues 1 to 9; it reads MVSPDLIRN. Residues 10–30 form a helical membrane-spanning segment; sequence MVGIVGNIISFGLFLSPVPTF. The MtN3/slv 1 domain maps to 10–97; it reads MVGIVGNIIS…TIFFLFSDKK (88 aa). The Cytoplasmic portion of the chain corresponds to 31 to 45; the sequence is YRIIKNKDVQDFKAD. The helical transmembrane segment at 46-66 threads the bilayer; the sequence is PYLATLLNCMLWVFYGLPIVH. Residues 67 to 69 lie on the Extracellular side of the membrane; that stretch reads PNS. A helical transmembrane segment spans residues 70–90; the sequence is ILVVTINGIGLVIEAVYLTIF. Topologically, residues 91–101 are cytoplasmic; the sequence is FLFSDKKNKKK. A helical transmembrane segment spans residues 102–122; it reads MGVVLATEALFMAAVVLGVLL. The Extracellular segment spans residues 123–131; it reads GAHTHQRRS. The helical transmembrane segment at 132–152 threads the bilayer; it reads LIVGILCVIFGTIMYSSPLTI. In terms of domain architecture, MtN3/slv 2 spans 133 to 215; the sequence is IVGILCVIFG…QLILYAIYYR (83 aa). Residues 153–165 are Cytoplasmic-facing; the sequence is MSQVVKTKSVEYM. Residues 166–186 traverse the membrane as a helical segment; that stretch reads PLLLSVVSFLNGLCWTSYALI. The Extracellular portion of the chain corresponds to 187–189; that stretch reads RLD. The helical transmembrane segment at 190-210 threads the bilayer; sequence IFITIPNGLGVLFALMQLILY. The Cytoplasmic segment spans residues 211–265; that stretch reads AIYYRTIPKKQDKNLELPTVAPVAKDTSIVTPVSKDDDVDGGNASHVTINITIEL.

Belongs to the SWEET sugar transporter family. In terms of assembly, forms homooligomers and/or heterooligomers.

Its subcellular location is the cell membrane. Functionally, mediates both low-affinity uptake and efflux of sugar across the plasma membrane. The sequence is that of Bidirectional sugar transporter SWEET7b (SWEET7B) from Oryza sativa subsp. japonica (Rice).